The sequence spans 506 residues: MVSIRPDEISAILKKQIEDYDKSVSVSNVGTVLTVGDGIARVYGLQQAMAGELIEFEDGTEGIALNLEDDNVGAVLMGEGYGIQEGSTVKATGKIAAVPVGEAMLGRVVNSLGRAIDGKGEIATSETRLIESMAPGIIQRKSVHEPMQTGITAIDAMIPVGRGQRELIIGDRQTGKTAIAIDTILNQADQDMICVYVAVGQKAASVANVVEVLRERGALDYTVIVAANASEPAALQYLAPYTGATIAEYFMYKGKATLVIYDDLSKQAAAYRQMSLLLRRPPGREAYPGDVFYCHSRLLERAAKLSDAMGKGSMTALPIIETQAGDVSAYIPTNVISITDGQIFLSSDLFNSGLRPAINVGISVSRVGGAAQTKAIKKIAGTLKLELAQFDELAAFSQFASDLDASTQQQLERGKRLRELLKQPQFSPLILAEQVAIVYAGVKGLIDDVPVDKVVDFSRELREYLKSNKAEFITEIQEKKVMSPEAEAILKDAITEVVSTMVASAA.

Residue 170–177 (GDRQTGKT) participates in ATP binding.

It belongs to the ATPase alpha/beta chains family. F-type ATPases have 2 components, CF(1) - the catalytic core - and CF(0) - the membrane proton channel. CF(1) has five subunits: alpha(3), beta(3), gamma(1), delta(1), epsilon(1). CF(0) has four main subunits: a(1), b(1), b'(1) and c(9-12).

Its subcellular location is the cellular thylakoid membrane. The enzyme catalyses ATP + H2O + 4 H(+)(in) = ADP + phosphate + 5 H(+)(out). Functionally, produces ATP from ADP in the presence of a proton gradient across the membrane. The alpha chain is a regulatory subunit. This is ATP synthase subunit alpha from Synechococcus sp. (strain CC9605).